The following is a 999-amino-acid chain: Testis anion transporter 1 (999 aa).

The Cytoplasmic portion of the chain corresponds to 1–93 (MQTERSLQSF…YRFKDWLLGD (93 aa)). Residues 94 to 114 (LLAGLSVGLVQVPQGLILSLL) form a helical membrane-spanning segment. At 115–117 (TRQ) the chain is on the extracellular side. A helical membrane pass occupies residues 118–138 (LIPPLNVTYAAFCSSVIYVIF). Residue Gly-139 is a topological domain, cytoplasmic. The chain crosses the membrane as a helical span at residues 140-160 (SCHQMSIGPFFLVSALMINVL). The Extracellular portion of the chain corresponds to 161-200 (KDRPFNNGHLILGTFVKDDFSVPTFYLSYNRSLSMVASTT). Asn-190 is a glycosylation site (N-linked (GlcNAc...) asparagine). A helical membrane pass occupies residues 201-221 (FLTGIIQLSMGMLGMGFMATY). Topologically, residues 222–230 (LPEAATSAY) are cytoplasmic. The chain crosses the membrane as a helical span at residues 231 to 251 (LAAVALHIILAQMTCILGIMV). Over 252-268 (SFHAGPISFIYNIINYC) the chain is Extracellular. A helical transmembrane segment spans residues 269-289 (IALPKANSTSILLFITSVVAL). Residues 290–305 (RINKCIRITFNRYPIE) lie on the Cytoplasmic side of the membrane. Residues 306-326 (FPMELLLILGFSLLTSKITMA) form a helical membrane-spanning segment. Topologically, residues 327–354 (TENSKMLMNMIPYSFVFPENPEFGILSR) are extracellular. The helical transmembrane segment at 355–375 (VVLQALSLSFVSSFLLISLGK) threads the bilayer. The Cytoplasmic portion of the chain corresponds to 376–390 (KIANFHNYRTNSNQD). The helical transmembrane segment at 391-411 (LIAIGLCNLLSSFFKCCVFTG) threads the bilayer. Over 412–427 (SLSRTTIQDKSGGRQQ) the chain is Extracellular. The helical transmembrane segment at 428 to 448 (FASLVGAGVMLLLMVKMESFF) threads the bilayer. The Cytoplasmic portion of the chain corresponds to 449-453 (HNLPN). The chain crosses the membrane as a helical span at residues 454-474 (AVLAGIILSNVVPYLEAIYNL). At 475 to 494 (PSLWRQDQYECIIWMVTFSS) the chain is on the extracellular side. Residues 495–515 (AILLGLDVGLLISLAFTFFVI) traverse the membrane as a helical segment. Residues 516–544 (TIRSHRTKILVLGQIPNTNIYRNVNDYRE) lie on the Cytoplasmic side of the membrane. An STAS domain is found at 541–796 (DYREVILIPG…LSLHDAVLFA (256 aa)). A helical transmembrane segment spans residues 545–565 (VILIPGVKIFQCCSSITFVNV). At 566–999 (YHLKQKVLKE…RKPHNYPNSP (434 aa)) the chain is on the extracellular side. The tract at residues 661-999 (TVSSTSQRNI…RKPHNYPNSP (339 aa)) is interaction with RACGAP1. Disordered stretches follow at residues 678-701 (EKAW…SESL) and 893-999 (SELD…PNSP). Over residues 684-696 (NSPPRNSPLPPPE) the composition is skewed to pro residues. Acidic residues-rich tracts occupy residues 893–903 (SELDPGSELDS) and 912–947 (ELES…EPEP). The segment covering 973 to 982 (GSSNSQSRAP) has biased composition (polar residues).

It belongs to the SLC26A/SulP transporter (TC 2.A.53) family. In terms of assembly, interacts with RACGAP1. Interacts with CFTR; stimulates anion transport activity of CFTR. N-glycosylated. In terms of tissue distribution, expressed in testis and epididymis. Located at the end of the midpiece of the flagella, known as the annulus, in spermatozoa.

Its subcellular location is the membrane. The enzyme catalyses sulfate(out) + chloride(in) = sulfate(in) + chloride(out). It carries out the reaction oxalate(in) + chloride(out) = oxalate(out) + chloride(in). Antiporter that mediates the exchange of sulfate and oxalate against chloride ions across a membrane. Stimulates anion transport activity of CFTR. May cooperate with CFTR in the regulation of chloride and bicarbonate ions fluxes required for activation of the ADCY10/PKA pathway during sperm motility and sperm capacitation. May play a role in sperm tail differentiation and motility and hence male fertility. This Mus musculus (Mouse) protein is Testis anion transporter 1.